The following is a 1167-amino-acid chain: Nucleolar protein 8 (1167 aa).

An RRM domain is found at 8–89 (KRLYVGGLSQ…GTLQIQLAKE (82 aa)). A disordered region spans residues 223 to 304 (VQKDESSTGS…NSISDDDTDS (82 aa)). Lysine 225 participates in a covalent cross-link: Glycyl lysine isopeptide (Lys-Gly) (interchain with G-Cter in SUMO2). Positions 248–275 (LTQQQAAQKRTCDSITPSKSSPVPVSDT) are enriched in polar residues. Phosphoserine occurs at positions 268 and 298. Threonine 302 carries the phosphothreonine modification. Residue serine 304 is modified to Phosphoserine. Lysine 314 is covalently cross-linked (Glycyl lysine isopeptide (Lys-Gly) (interchain with G-Cter in SUMO2)). A phosphoserine mark is found at serine 331 and serine 365. Tyrosine 376 carries the post-translational modification Phosphotyrosine. Position 378 is a phosphoserine (serine 378). Position 381 is a phosphothreonine (threonine 381). Residue serine 432 is modified to Phosphoserine. Disordered regions lie at residues 435 to 470 (ESALSHGLKSLNRKSPSHSSSSEDADSASELADSEG), 499 to 533 (LKVPNEDTKSDGPETTTQCKFDRGSKSPKTPTGLR), 590 to 908 (KDSV…EEEL), 932 to 982 (NRGS…AEKL), and 1006 to 1026 (YTSEKEEGTPWNEDCGKEKPE). The segment covering 457–470 (EDADSASELADSEG) has biased composition (acidic residues). Basic and acidic residues predominate over residues 501–510 (VPNEDTKSDG). Over residues 640–652 (NYIQPQKRQTTFE) the composition is skewed to polar residues. The span at 653–668 (SQDRKAVSPSSSEKRS) shows a compositional bias: basic and acidic residues. Serine 723 is modified (phosphoserine). The segment covering 727–736 (SSKDTREIKT) has biased composition (basic and acidic residues). Over residues 738 to 748 (FSLSISNSSDV) the composition is skewed to polar residues. Residues 749-776 (SAKDKHAEDNEKRLAALEARQKAKEVQK) show a composition bias toward basic and acidic residues. Residues 753 to 779 (KHAEDNEKRLAALEARQKAKEVQKKLV) adopt a coiled-coil conformation. A Phosphothreonine modification is found at threonine 795. Phosphoserine is present on serine 801. The span at 817 to 827 (HPGEEWVKESM) shows a compositional bias: basic and acidic residues. Serine 837, serine 838, serine 843, and serine 845 each carry phosphoserine. Acidic residues predominate over residues 837–847 (SSDDDESDSED). Basic and acidic residues predominate over residues 874 to 887 (GTDDRFRMDSRFLE). Residues 886-924 (LETDSEEEQEEVNEKKTAEEEELAEEKKKALNVVQSVLQ) are a coiled coil. The residue at position 888 (threonine 888) is a Phosphothreonine. Residue serine 890 is modified to Phosphoserine. Composition is skewed to basic and acidic residues over residues 940–968 (KFKDIIHYDPTKQDHATYERKRDDKPKES) and 1007–1026 (TSEKEEGTPWNEDCGKEKPE). A Phosphoserine modification is found at serine 1036. Lysine 1057 participates in a covalent cross-link: Glycyl lysine isopeptide (Lys-Gly) (interchain with G-Cter in SUMO2). Disordered regions lie at residues 1071-1105 (IVWQEDPRLQDSSSEEEDVTEETDHRNSSPGEASL) and 1145-1167 (RTTNLRMDCRKKHKDAKRKMKPK). Serine 1082, serine 1083, serine 1084, and serine 1099 each carry phosphoserine. Residues 1153–1167 (CRKKHKDAKRKMKPK) are compositionally biased toward basic residues.

In terms of assembly, interacts with the GTP form of RRAGA, RRAGC and RRAGD. Interacts with NIP7. Interacts with DDX18; the interaction is RNA-dependent. Interacts with DDX47; the interaction is RNA-dependent. Post-translationally, phosphorylated. In terms of tissue distribution, expressed in various diffuse-type gastric cancers. Detected at lower levels in skeletal muscle.

Its subcellular location is the nucleus. The protein resides in the nucleolus. In terms of biological role, plays an essential role in the survival of diffuse-type gastric cancer cells. Acts as a nucleolar anchoring protein for DDX47. May be involved in regulation of gene expression at the post-transcriptional level or in ribosome biogenesis in cancer cells. The sequence is that of Nucleolar protein 8 from Homo sapiens (Human).